A 427-amino-acid chain; its full sequence is MAQVCSISVNHRHAGIEGIERARFRDPDVAMLRLLSLPGVSEAVVLQTCNRVEIYAVAESVEDIVGFARAEGMPLEIAEVRAGDDCLKGLLRLACGLESMIVGEDQILGQLKTALLQARRLGTIGPVLSTAIQKSIHVGARARIETEINKGSVSIGSAAVELAESLLGDLRGRTILVVGAGEMGTLVANAMAEKSLRAIYVANRTFEQAEKLASSLQGVAIRLERLCDYMGSADVVICATGAPHLIITKKMVEQCKGEKPLIFIDITNPRNIEETVGEVPGVTLHNIDSLRQINEASMRRRQGEARKVEAIIEEELVLLQRDIRRLHADRVIGDLYQRTDHIRATELRRAVARLSTAGSLTEQQISILHDFSMALTNKILAAPTRQLRRAAERCDEDCLRTAEELFDLWVEESNGIPGNKTKASKTD.

Substrate-binding positions include 48–51 (TCNR), serine 99, 104–106 (EDQ), and glutamine 110. The active-site Nucleophile is the cysteine 49. 179–184 (GAGEMG) provides a ligand contact to NADP(+).

This sequence belongs to the glutamyl-tRNA reductase family. Homodimer.

The catalysed reaction is (S)-4-amino-5-oxopentanoate + tRNA(Glu) + NADP(+) = L-glutamyl-tRNA(Glu) + NADPH + H(+). It functions in the pathway porphyrin-containing compound metabolism; protoporphyrin-IX biosynthesis; 5-aminolevulinate from L-glutamyl-tRNA(Glu): step 1/2. Catalyzes the NADPH-dependent reduction of glutamyl-tRNA(Glu) to glutamate 1-semialdehyde (GSA). The protein is Glutamyl-tRNA reductase of Methanocella arvoryzae (strain DSM 22066 / NBRC 105507 / MRE50).